Reading from the N-terminus, the 45-residue chain is Large ribosomal subunit protein bL34c (45 aa).

Over residues 1–10 (MSKGFSNGTN) the composition is skewed to polar residues. Residues 1-45 (MSKGFSNGTNIKRVRKSGFRARMSNSSGRKILNSRRRKQRKKIAL) form a disordered region. Residues 32–45 (LNSRRRKQRKKIAL) show a composition bias toward basic residues.

This sequence belongs to the bacterial ribosomal protein bL34 family.

The protein resides in the plastid. The protein localises to the chloroplast. This Gracilaria tenuistipitata var. liui (Red alga) protein is Large ribosomal subunit protein bL34c.